The following is a 546-amino-acid chain: 5'-nucleotidase domain-containing protein 3 (546 aa).

Residue Asp-100 is the Nucleophile of the active site. The Mg(2+) site is built by Asp-100 and Asp-102. Asp-102 functions as the Proton donor in the catalytic mechanism. 249 to 257 (KDSIRDVHI) lines the substrate pocket. Asp-387 is a Mg(2+) binding site.

Belongs to the 5'(3')-deoxyribonucleotidase family. The cofactor is Mg(2+).

The polypeptide is 5'-nucleotidase domain-containing protein 3 (Nt5dc3) (Mus musculus (Mouse)).